The sequence spans 104 residues: Large ribosomal subunit protein bL21 (104 aa).

This sequence belongs to the bacterial ribosomal protein bL21 family. Part of the 50S ribosomal subunit. Contacts protein L20.

In terms of biological role, this protein binds to 23S rRNA in the presence of protein L20. In Opitutus terrae (strain DSM 11246 / JCM 15787 / PB90-1), this protein is Large ribosomal subunit protein bL21.